The sequence spans 264 residues: MAATGEALTPQGYIQHHLTNLHVGEGFWTWHIDSLFFSVGLGVLFLWLFRSVGKKATTGVPGKLQCFIEMIVEFVDGSVKETFHGRNPVIAPLALTIFVWVFMMNFMDMIPVDWLPWAAGLAGITHLKVVPTTDLNITFSLALGVFVLIIYYSIKVKGVSGFVKELTLQPFNHKAMIPVNLLLESVTLIAKPISLALRLFGNLYAGELIFILIALMYGANLALSALGVTLQLGWLIFHILVITLQAFIFMMLTIVYLSMAHEDH.

Transmembrane regions (helical) follow at residues 29–49 (TWHIDSLFFSVGLGVLFLWLF), 90–110 (IAPLALTIFVWVFMMNFMDMI), 134–154 (DLNITFSLALGVFVLIIYYSI), 177–197 (IPVNLLLESVTLIAKPISLAL), 208–228 (LIFILIALMYGANLALSALGV), and 235–255 (LIFHILVITLQAFIFMMLTIV).

It belongs to the ATPase A chain family. F-type ATPases have 2 components, CF(1) - the catalytic core - and CF(0) - the membrane proton channel. CF(1) has five subunits: alpha(3), beta(3), gamma(1), delta(1), epsilon(1). CF(0) has three main subunits: a(1), b(2) and c(9-12). The alpha and beta chains form an alternating ring which encloses part of the gamma chain. CF(1) is attached to CF(0) by a central stalk formed by the gamma and epsilon chains, while a peripheral stalk is formed by the delta and b chains.

It localises to the cell inner membrane. In terms of biological role, key component of the proton channel; it plays a direct role in the translocation of protons across the membrane. The chain is ATP synthase subunit a from Shewanella loihica (strain ATCC BAA-1088 / PV-4).